Consider the following 156-residue polypeptide: Small ribosomal subunit protein uS7 (156 aa).

Belongs to the universal ribosomal protein uS7 family. Part of the 30S ribosomal subunit. Contacts proteins S9 and S11.

One of the primary rRNA binding proteins, it binds directly to 16S rRNA where it nucleates assembly of the head domain of the 30S subunit. Is located at the subunit interface close to the decoding center, probably blocks exit of the E-site tRNA. In Clostridium tetani (strain Massachusetts / E88), this protein is Small ribosomal subunit protein uS7.